Here is a 261-residue protein sequence, read N- to C-terminus: Enolase-phosphatase E1 (261 aa).

Residues D16 and E18 each contribute to the Mg(2+) site. Residues 153 to 154 (SS) and K187 contribute to the substrate site. Residue D212 participates in Mg(2+) binding.

It belongs to the HAD-like hydrolase superfamily. MasA/MtnC family. As to quaternary structure, monomer. Mg(2+) serves as cofactor.

The protein localises to the cytoplasm. It localises to the nucleus. The enzyme catalyses 5-methylsulfanyl-2,3-dioxopentyl phosphate + H2O = 1,2-dihydroxy-5-(methylsulfanyl)pent-1-en-3-one + phosphate. It participates in amino-acid biosynthesis; L-methionine biosynthesis via salvage pathway; L-methionine from S-methyl-5-thio-alpha-D-ribose 1-phosphate: step 3/6. The protein operates within amino-acid biosynthesis; L-methionine biosynthesis via salvage pathway; L-methionine from S-methyl-5-thio-alpha-D-ribose 1-phosphate: step 4/6. Its function is as follows. Bifunctional enzyme that catalyzes the enolization of 2,3-diketo-5-methylthiopentyl-1-phosphate (DK-MTP-1-P) into the intermediate 2-hydroxy-3-keto-5-methylthiopentenyl-1-phosphate (HK-MTPenyl-1-P), which is then dephosphorylated to form the acireductone 1,2-dihydroxy-3-keto-5-methylthiopentene (DHK-MTPene). In Danio rerio (Zebrafish), this protein is Enolase-phosphatase E1 (enoph1).